The chain runs to 1188 residues: DNA-directed RNA polymerase subunit beta (1188 aa).

This sequence belongs to the RNA polymerase beta chain family. As to quaternary structure, the RNAP catalytic core consists of 2 alpha, 1 beta, 1 beta' and 1 omega subunit. When a sigma factor is associated with the core the holoenzyme is formed, which can initiate transcription.

The catalysed reaction is RNA(n) + a ribonucleoside 5'-triphosphate = RNA(n+1) + diphosphate. Its function is as follows. DNA-dependent RNA polymerase catalyzes the transcription of DNA into RNA using the four ribonucleoside triphosphates as substrates. The chain is DNA-directed RNA polymerase subunit beta from Streptococcus pyogenes serotype M18 (strain MGAS8232).